Reading from the N-terminus, the 377-residue chain is Transcription factor SOX-18 (377 aa).

Residues 1 to 76 (MQRSPPGYGA…GRGERQTADE (76 aa)) form a disordered region. 2 stretches are compositionally biased toward low complexity: residues 21–34 (AWAP…EARG) and 41–52 (SPTSPASPSSLP). The segment at residues 79-147 (IRRPMNAFMV…QHLRDHPNYK (69 aa)) is a DNA-binding region (HMG box). Interaction with DNA stretches follow at residues 81 to 94 (RPMN…KDER) and 105 to 117 (HNAV…GKAW). An important for transcriptional activation region spans residues 160–225 (RRLEPGLLLP…GLEPGEASFF (66 aa)). One can recognise a Sox C-terminal domain in the interval 256-376 (GAPLAEALRT…SAVYYSACIS (121 aa)). Residues 318-326 (TEFDQYLNC) carry the 9aaTAD motif.

In terms of assembly, interacts (via C-terminus) with MEF2C (via MADS box). In terms of tissue distribution, detected in adult lung, heart and skeletal muscles.

It localises to the nucleus. Functionally, transcriptional activator that binds to the consensus sequence 5'-AACAAAG-3' in the promoter of target genes and plays an essential role in embryonic cardiovascular development and lymphangiogenesis. Activates transcription of PROX1 and other genes coding for lymphatic endothelial markers. Plays an essential role in triggering the differentiation of lymph vessels, but is not required for the maintenance of differentiated lymphatic endothelial cells. Plays an important role in postnatal angiogenesis, where it is functionally redundant with SOX17. Interaction with MEF2C enhances transcriptional activation. Besides, required for normal hair development. In Mus musculus (Mouse), this protein is Transcription factor SOX-18 (Sox18).